Here is a 139-residue protein sequence, read N- to C-terminus: Peptide methionine sulfoxide reductase MsrB (139 aa).

One can recognise a MsrB domain in the interval 8–130 (DREWQRELSP…NSASLQLKTQ (123 aa)). Zn(2+) contacts are provided by Cys47, Cys50, Cys96, and Cys99. Cys119 (nucleophile) is an active-site residue.

It belongs to the MsrB Met sulfoxide reductase family. Zn(2+) is required as a cofactor.

It carries out the reaction L-methionyl-[protein] + [thioredoxin]-disulfide + H2O = L-methionyl-(R)-S-oxide-[protein] + [thioredoxin]-dithiol. The chain is Peptide methionine sulfoxide reductase MsrB from Acinetobacter baumannii (strain AB307-0294).